Here is a 143-residue protein sequence, read N- to C-terminus: Small ribosomal subunit protein uS11c (143 aa).

It belongs to the universal ribosomal protein uS11 family. In terms of assembly, part of the 30S ribosomal subunit.

It localises to the plastid. The protein localises to the chloroplast. In Brachypodium distachyon (Purple false brome), this protein is Small ribosomal subunit protein uS11c.